Here is a 131-residue protein sequence, read N- to C-terminus: Aspartate 1-decarboxylase (131 aa).

The active-site Schiff-base intermediate with substrate; via pyruvic acid is the serine 25. Residue serine 25 is modified to Pyruvic acid (Ser). Threonine 57 is a binding site for substrate. Catalysis depends on tyrosine 58, which acts as the Proton donor. 73 to 75 contributes to the substrate binding site; that stretch reads GAA.

Belongs to the PanD family. As to quaternary structure, heterooctamer of four alpha and four beta subunits. Requires pyruvate as cofactor. In terms of processing, is synthesized initially as an inactive proenzyme, which is activated by self-cleavage at a specific serine bond to produce a beta-subunit with a hydroxyl group at its C-terminus and an alpha-subunit with a pyruvoyl group at its N-terminus.

The protein resides in the cytoplasm. The catalysed reaction is L-aspartate + H(+) = beta-alanine + CO2. It functions in the pathway cofactor biosynthesis; (R)-pantothenate biosynthesis; beta-alanine from L-aspartate: step 1/1. Catalyzes the pyruvoyl-dependent decarboxylation of aspartate to produce beta-alanine. The protein is Aspartate 1-decarboxylase of Chlorobium phaeobacteroides (strain DSM 266 / SMG 266 / 2430).